We begin with the raw amino-acid sequence, 418 residues long: UDP-N-acetylglucosamine 1-carboxyvinyltransferase (418 aa).

Residue 23–24 (KN) participates in phosphoenolpyruvate binding. Arginine 92 lines the UDP-N-acetyl-alpha-D-glucosamine pocket. Cysteine 116 acts as the Proton donor in catalysis. Cysteine 116 carries the post-translational modification 2-(S-cysteinyl)pyruvic acid O-phosphothioketal. UDP-N-acetyl-alpha-D-glucosamine-binding positions include 121-125 (RPVDL), 161-164 (KVSV), aspartate 306, and isoleucine 328.

This sequence belongs to the EPSP synthase family. MurA subfamily.

It localises to the cytoplasm. It carries out the reaction phosphoenolpyruvate + UDP-N-acetyl-alpha-D-glucosamine = UDP-N-acetyl-3-O-(1-carboxyvinyl)-alpha-D-glucosamine + phosphate. It functions in the pathway cell wall biogenesis; peptidoglycan biosynthesis. Functionally, cell wall formation. Adds enolpyruvyl to UDP-N-acetylglucosamine. This Vibrio parahaemolyticus serotype O3:K6 (strain RIMD 2210633) protein is UDP-N-acetylglucosamine 1-carboxyvinyltransferase.